The primary structure comprises 292 residues: Putative FNIP repeat-containing protein L281 (292 aa).

One copy of the FNIP repeat lies at Phe-95–Ser-134.

The polypeptide is Putative FNIP repeat-containing protein L281 (Acanthamoeba polyphaga mimivirus (APMV)).